Reading from the N-terminus, the 218-residue chain is uncharacterized protein (218 aa).

Residues 11–31 (AAGLFPLALMLSGCISYALVS) traverse the membrane as a helical segment.

The protein resides in the membrane. This is an uncharacterized protein from Escherichia coli (strain K12).